Here is a 33-residue protein sequence, read N- to C-terminus: Maurocalcin (33 aa).

3 cysteine pairs are disulfide-bonded: Cys-3–Cys-17, Cys-10–Cys-21, and Cys-16–Cys-32. Positions 22 to 24 (KRR) are essential for stimulation of [3H]ryanodine binding to RYR.

It belongs to the scorpion calcin family. The non-natural D-maurocalcin (a chiral analog of maurocalcin composed of D-amino acids) completely loses the ability to stimulate [3H]ryanodine binding and calcium release. Its protease resistance, combined with its efficient cell penetration at concentrations devoid of cell toxicity, suggests that it should be an excellent vector for in vivo applications. Expressed by the venom gland.

It localises to the secreted. This toxin stabilizes ryanodine receptor 1 (RyR1) opening in a long-lasting subconductance state (48%-60% of the full conductance state). Furthermore, it triggers calcium release from sarcoplasmic vesicles (6.6 nM are enough to induce a sharp release, and 60% of the total calcium is released after toxin (100 nM) addition) probably by acting as a cell-penetrating peptide (CPP). In addition, it has been shown to dose-dependently stimulate ryanodine binding to RyR1 (EC(50)=12.5-26.4 nM). It also augments the bell-shaped calcium-[3H]ryanodine binding curve that is maximal at about 10 uM calcium concentration. It binds a different site as ryanodine. It acts synergistically with caffeine. In vivo, intracerebroventricular injection into mice causes death. The chain is Maurocalcin from Scorpio palmatus (Israeli golden scorpion).